A 282-amino-acid polypeptide reads, in one-letter code: MKRRPAVAGSFYEDDSAQLRKRIEWAFHHPIGPGGIPSVGSTGSRSNPIFIVPHAGYIYSGPVAAHSYYYLAQEGKPDIVIILGPNHTGYGSQVSIWPGGDWETPLGSAQVNAQLVKELVSVSEVVDIDEKAHLYEHSIEVQLPFLQYFFDNLSILPVVILMQTPEIAEFVAEGIWRFIQRHSDKDIVVLASSDLNHYDPHDVTMTKDELVIRKIQDMDYKGLYKVVEEYDVTVCGYAPIMASLILAKKMHKKPYILKHATSGDTSGDKSSVVGYLATRFSD.

It belongs to the MEMO1 family.

This chain is MEMO1 family protein Msed_2139, found in Metallosphaera sedula (strain ATCC 51363 / DSM 5348 / JCM 9185 / NBRC 15509 / TH2).